We begin with the raw amino-acid sequence, 329 residues long: Malate dehydrogenase (329 aa).

12–18 contacts NAD(+); that stretch reads GAAGQIC. Arg95 and Arg101 together coordinate substrate. NAD(+)-binding positions include Asn108, Gln115, and 132 to 134; that span reads VGN. Substrate-binding residues include Asn134 and Arg165. The active-site Proton acceptor is the His190.

This sequence belongs to the LDH/MDH superfamily. MDH type 2 family. As to quaternary structure, homodimer.

It catalyses the reaction (S)-malate + NAD(+) = oxaloacetate + NADH + H(+). Catalyzes the reversible oxidation of malate to oxaloacetate. This chain is Malate dehydrogenase, found in Aquaspirillum arcticum.